The primary structure comprises 725 residues: G-quartet DNA-binding protein TGP1 (725 aa).

Residues 241–258 (KKALTDVLQIHEKKERVH) carry the Nuclear localization signal motif. Disordered regions lie at residues 252–284 (EKKERVHKQQNKNKNPRNAHKNHNRQRPNLQET) and 468–614 (EIHK…GKRG). The segment covering 256–277 (RVHKQQNKNKNPRNAHKNHNRQ) has biased composition (basic residues). Residues 468-478 (EIHKIDRERKR) show a composition bias toward basic and acidic residues. The span at 517 to 544 (NKYKNTSVQNNNNNKNQQRSQSQNQRPP) shows a compositional bias: low complexity. The span at 545–564 (RNYDNRQGGENRNNRQRNEN) shows a compositional bias: basic and acidic residues. Over residues 565–593 (NRNNFNGNGHRVNNQNNQRNRNSSYPRNN) the composition is skewed to low complexity.

The N-terminus is blocked.

The protein resides in the nucleus. Functionally, binds specifically to parallel G4-DNA, a four-stranded structure stabilized by tetrads of hydrogen-bonded guanines. The chain is G-quartet DNA-binding protein TGP1 (TGP1) from Tetrahymena thermophila.